We begin with the raw amino-acid sequence, 198 residues long: MEHYLSLFVKSIFIENLALSFFLGMCTFLAVSKKVKTAMGLGIAVVVVQAIAVPANNLVFTYVLKENALVQGMDLTFLGFITYIGVIAALVQILEMFLDRYVPSLYSALGIFLPLITVNCAIFGGVSFMVQREYNFPESVVYGVGSGISWALAIVLMAAIREKMKYSDVPPGLRGLGITFITAGLMALGFMSFSGISL.

Transmembrane regions (helical) follow at residues 11–31 (SIFI…FLAV), 40–60 (GLGI…NLVF), 77–97 (FLGF…LEMF), 110–130 (GIFL…SFMV), 140–160 (VVYG…MAAI), and 176–196 (LGIT…FSGI).

The protein belongs to the NqrDE/RnfAE family. As to quaternary structure, composed of six subunits; NqrA, NqrB, NqrC, NqrD, NqrE and NqrF.

It is found in the cell inner membrane. It carries out the reaction a ubiquinone + n Na(+)(in) + NADH + H(+) = a ubiquinol + n Na(+)(out) + NAD(+). In terms of biological role, NQR complex catalyzes the reduction of ubiquinone-1 to ubiquinol by two successive reactions, coupled with the transport of Na(+) ions from the cytoplasm to the periplasm. NqrA to NqrE are probably involved in the second step, the conversion of ubisemiquinone to ubiquinol. In Tolumonas auensis (strain DSM 9187 / NBRC 110442 / TA 4), this protein is Na(+)-translocating NADH-quinone reductase subunit E.